Consider the following 481-residue polypeptide: 2-succinylbenzoate--CoA ligase (481 aa).

The protein belongs to the ATP-dependent AMP-binding enzyme family. MenE subfamily.

It catalyses the reaction 2-succinylbenzoate + ATP + CoA = 2-succinylbenzoyl-CoA + AMP + diphosphate. It functions in the pathway quinol/quinone metabolism; 1,4-dihydroxy-2-naphthoate biosynthesis; 1,4-dihydroxy-2-naphthoate from chorismate: step 5/7. Its pathway is quinol/quinone metabolism; menaquinone biosynthesis. Converts 2-succinylbenzoate (OSB) to 2-succinylbenzoyl-CoA (OSB-CoA). This chain is 2-succinylbenzoate--CoA ligase, found in Bacillus mycoides (strain KBAB4) (Bacillus weihenstephanensis).